A 336-amino-acid chain; its full sequence is 4-hydroxy-3-methylbut-2-enyl diphosphate reductase (336 aa).

Residue cysteine 37 participates in [4Fe-4S] cluster binding. The (2E)-4-hydroxy-3-methylbut-2-enyl diphosphate site is built by histidine 66 and histidine 99. Positions 66 and 99 each coordinate dimethylallyl diphosphate. 2 residues coordinate isopentenyl diphosphate: histidine 66 and histidine 99. Cysteine 121 lines the [4Fe-4S] cluster pocket. Histidine 149 lines the (2E)-4-hydroxy-3-methylbut-2-enyl diphosphate pocket. Histidine 149 is a binding site for dimethylallyl diphosphate. Histidine 149 is an isopentenyl diphosphate binding site. Catalysis depends on glutamate 151, which acts as the Proton donor. Threonine 189 serves as a coordination point for (2E)-4-hydroxy-3-methylbut-2-enyl diphosphate. Position 219 (cysteine 219) interacts with [4Fe-4S] cluster. (2E)-4-hydroxy-3-methylbut-2-enyl diphosphate contacts are provided by serine 247, serine 248, asparagine 249, and serine 292. Dimethylallyl diphosphate-binding residues include serine 247, serine 248, asparagine 249, and serine 292. Isopentenyl diphosphate-binding residues include serine 247, serine 248, asparagine 249, and serine 292.

Belongs to the IspH family. [4Fe-4S] cluster serves as cofactor.

The catalysed reaction is isopentenyl diphosphate + 2 oxidized [2Fe-2S]-[ferredoxin] + H2O = (2E)-4-hydroxy-3-methylbut-2-enyl diphosphate + 2 reduced [2Fe-2S]-[ferredoxin] + 2 H(+). It catalyses the reaction dimethylallyl diphosphate + 2 oxidized [2Fe-2S]-[ferredoxin] + H2O = (2E)-4-hydroxy-3-methylbut-2-enyl diphosphate + 2 reduced [2Fe-2S]-[ferredoxin] + 2 H(+). It participates in isoprenoid biosynthesis; dimethylallyl diphosphate biosynthesis; dimethylallyl diphosphate from (2E)-4-hydroxy-3-methylbutenyl diphosphate: step 1/1. The protein operates within isoprenoid biosynthesis; isopentenyl diphosphate biosynthesis via DXP pathway; isopentenyl diphosphate from 1-deoxy-D-xylulose 5-phosphate: step 6/6. Its function is as follows. Catalyzes the conversion of 1-hydroxy-2-methyl-2-(E)-butenyl 4-diphosphate (HMBPP) into a mixture of isopentenyl diphosphate (IPP) and dimethylallyl diphosphate (DMAPP). Acts in the terminal step of the DOXP/MEP pathway for isoprenoid precursor biosynthesis. The protein is 4-hydroxy-3-methylbut-2-enyl diphosphate reductase of Rhodococcus jostii (strain RHA1).